The sequence spans 165 residues: 6,7-dimethyl-8-ribityllumazine synthase (165 aa).

Residues W26, 58 to 60, and 80 to 82 each bind 5-amino-6-(D-ribitylamino)uracil; these read SIE and VVI. 85–86 contributes to the (2S)-2-hydroxy-3-oxobutyl phosphate binding site; that stretch reads GT. Residue H88 is the Proton donor of the active site. N113 is a binding site for 5-amino-6-(D-ribitylamino)uracil. R127 provides a ligand contact to (2S)-2-hydroxy-3-oxobutyl phosphate.

It belongs to the DMRL synthase family.

The enzyme catalyses (2S)-2-hydroxy-3-oxobutyl phosphate + 5-amino-6-(D-ribitylamino)uracil = 6,7-dimethyl-8-(1-D-ribityl)lumazine + phosphate + 2 H2O + H(+). It functions in the pathway cofactor biosynthesis; riboflavin biosynthesis; riboflavin from 2-hydroxy-3-oxobutyl phosphate and 5-amino-6-(D-ribitylamino)uracil: step 1/2. Functionally, catalyzes the formation of 6,7-dimethyl-8-ribityllumazine by condensation of 5-amino-6-(D-ribitylamino)uracil with 3,4-dihydroxy-2-butanone 4-phosphate. This is the penultimate step in the biosynthesis of riboflavin. The sequence is that of 6,7-dimethyl-8-ribityllumazine synthase from Saccharopolyspora erythraea (strain ATCC 11635 / DSM 40517 / JCM 4748 / NBRC 13426 / NCIMB 8594 / NRRL 2338).